Consider the following 469-residue polypeptide: tRNA-2-methylthio-N(6)-dimethylallyladenosine synthase (469 aa).

Residues 22–142 (RKVFIKTYGC…LPEALRRAQQ (121 aa)) enclose the MTTase N-terminal domain. Positions 31, 67, 105, 183, 187, and 190 each coordinate [4Fe-4S] cluster. The Radical SAM core domain maps to 169-401 (RARGVTAFLT…QALLLKQQQE (233 aa)). In terms of domain architecture, TRAM spans 404 to 466 (ESCIGKEIDL…TNSLFAERAE (63 aa)).

Belongs to the methylthiotransferase family. MiaB subfamily. In terms of assembly, monomer. Requires [4Fe-4S] cluster as cofactor.

It localises to the cytoplasm. It catalyses the reaction N(6)-dimethylallyladenosine(37) in tRNA + (sulfur carrier)-SH + AH2 + 2 S-adenosyl-L-methionine = 2-methylsulfanyl-N(6)-dimethylallyladenosine(37) in tRNA + (sulfur carrier)-H + 5'-deoxyadenosine + L-methionine + A + S-adenosyl-L-homocysteine + 2 H(+). Catalyzes the methylthiolation of N6-(dimethylallyl)adenosine (i(6)A), leading to the formation of 2-methylthio-N6-(dimethylallyl)adenosine (ms(2)i(6)A) at position 37 in tRNAs that read codons beginning with uridine. The chain is tRNA-2-methylthio-N(6)-dimethylallyladenosine synthase from Rhizobium etli (strain CIAT 652).